A 332-amino-acid polypeptide reads, in one-letter code: Holliday junction branch migration complex subunit RuvB (332 aa).

The segment at 1 to 181 (MTRFLDSDAM…FGITGHMEYY (181 aa)) is large ATPase domain (RuvB-L). ATP is bound by residues L20, R21, G62, K65, T66, T67, 128-130 (EDF), R171, Y181, and R218. T66 lines the Mg(2+) pocket. A small ATPAse domain (RuvB-S) region spans residues 182–252 (EENDLTEIIE…ITDKALTMLD (71 aa)). The head domain (RuvB-H) stretch occupies residues 255 to 332 (HEGLDYVDQK…EHLGYQRFDK (78 aa)). 4 residues coordinate DNA: R291, R310, R312, and R315.

It belongs to the RuvB family. Homohexamer. Forms an RuvA(8)-RuvB(12)-Holliday junction (HJ) complex. HJ DNA is sandwiched between 2 RuvA tetramers; dsDNA enters through RuvA and exits via RuvB. An RuvB hexamer assembles on each DNA strand where it exits the tetramer. Each RuvB hexamer is contacted by two RuvA subunits (via domain III) on 2 adjacent RuvB subunits; this complex drives branch migration. In the full resolvosome a probable DNA-RuvA(4)-RuvB(12)-RuvC(2) complex forms which resolves the HJ.

It is found in the cytoplasm. It catalyses the reaction ATP + H2O = ADP + phosphate + H(+). Its function is as follows. The RuvA-RuvB-RuvC complex processes Holliday junction (HJ) DNA during genetic recombination and DNA repair, while the RuvA-RuvB complex plays an important role in the rescue of blocked DNA replication forks via replication fork reversal (RFR). RuvA specifically binds to HJ cruciform DNA, conferring on it an open structure. The RuvB hexamer acts as an ATP-dependent pump, pulling dsDNA into and through the RuvAB complex. RuvB forms 2 homohexamers on either side of HJ DNA bound by 1 or 2 RuvA tetramers; 4 subunits per hexamer contact DNA at a time. Coordinated motions by a converter formed by DNA-disengaged RuvB subunits stimulates ATP hydrolysis and nucleotide exchange. Immobilization of the converter enables RuvB to convert the ATP-contained energy into a lever motion, pulling 2 nucleotides of DNA out of the RuvA tetramer per ATP hydrolyzed, thus driving DNA branch migration. The RuvB motors rotate together with the DNA substrate, which together with the progressing nucleotide cycle form the mechanistic basis for DNA recombination by continuous HJ branch migration. Branch migration allows RuvC to scan DNA until it finds its consensus sequence, where it cleaves and resolves cruciform DNA. This is Holliday junction branch migration complex subunit RuvB from Streptococcus agalactiae serotype Ia (strain ATCC 27591 / A909 / CDC SS700).